The following is a 550-amino-acid chain: Major fimbrium tip subunit FimE (550 aa).

Residues 1–21 form the signal peptide; sequence MKSKSIIAQLLYVLIAFMAVS. Cysteine 22 carries the N-palmitoyl cysteine lipid modification. Cysteine 22 is lipidated: S-diacylglycerol cysteine. The propeptide occupies 22–51; the sequence is CVADKSEPCPSGEPTRVSGSIVSLEHHGLR.

It belongs to the FimE family. Fimbriae are composed of a major, structural subunit and the minor components FimC, FimD and FimE. Identified in a complex composed of FimC, FimD and FimE (in vitro). Does not directly interact with host proteins, but only as a complex with FimC and FimD.

It is found in the fimbrium. The protein localises to the cell outer membrane. Probably a component of the fimbrium tip; required for incorporation of FimC and FimD into fimbriae. These long, filamentous pili are attached to the cell surface; they mediate biofilm formation, adhesion onto host cells and onto other bacteria that are part of the oral microbiome. They play an important role in invasion of periodontal tissues and are major virulence factors. FimC, FimD and FimE contribute to interaction with host CXCR4 and thereby down-regulate the TLR2-mediated host immune response. The polypeptide is Major fimbrium tip subunit FimE (Porphyromonas gingivalis (strain ATCC 33277 / DSM 20709 / CIP 103683 / JCM 12257 / NCTC 11834 / 2561)).